Reading from the N-terminus, the 446-residue chain is MVAQAPHDDHQDDEKLAAARQKEIEDWLPITSSRNAKWWYSAFHNVTAMVGAGVLGLPYAMSQLGWGPGIAVLVLSWVITLYTLWQMVEMHEMVPGKRFDRYHELGQHAFGEKLGLYIVVPQQLIVEIGVCIVYMVTGGKSLKKFHELVCDDCKPIKLTYFIMIFASVHFVLSHLPNFNSISGVSLAAAVMSLSYSTIAWASSASKGVQEDVQYGYKAKTTAGTVFNFFSGLGDVAFAYAGHNVVLEIQATIPSTPEKPSKGPMWRGVIVAYIVVALCYFPVALVGYYIFGNGVEDNILMSLKKPAWLIATANIFVVIHVIGSYQIYAMPVFDMMETLLVKKLNFRPTTTLRFFVRNFYVAATMFVGMTFPFFGGLLAFFGGFAFAPTTYFLPCVIWLAIYKPKKYSLSWWANWVCIVFGLFLMVLSPIGGLRTIVIQAKGYKFYS.

The Cytoplasmic portion of the chain corresponds to 1–37; the sequence is MVAQAPHDDHQDDEKLAAARQKEIEDWLPITSSRNAK. A helical transmembrane segment spans residues 38 to 58; sequence WWYSAFHNVTAMVGAGVLGLP. At 59 to 63 the chain is on the extracellular side; it reads YAMSQ. Residues 64-84 form a helical membrane-spanning segment; it reads LGWGPGIAVLVLSWVITLYTL. Topologically, residues 85 to 115 are cytoplasmic; sequence WQMVEMHEMVPGKRFDRYHELGQHAFGEKLG. Residues 116-136 traverse the membrane as a helical segment; sequence LYIVVPQQLIVEIGVCIVYMV. The Extracellular portion of the chain corresponds to 137–157; that stretch reads TGGKSLKKFHELVCDDCKPIK. A helical membrane pass occupies residues 158–178; the sequence is LTYFIMIFASVHFVLSHLPNF. Residues 179 to 180 lie on the Cytoplasmic side of the membrane; the sequence is NS. The helical transmembrane segment at 181–201 threads the bilayer; sequence ISGVSLAAAVMSLSYSTIAWA. Residues 202–227 are Extracellular-facing; the sequence is SSASKGVQEDVQYGYKAKTTAGTVFN. A helical transmembrane segment spans residues 228 to 248; it reads FFSGLGDVAFAYAGHNVVLEI. The Cytoplasmic portion of the chain corresponds to 249–268; it reads QATIPSTPEKPSKGPMWRGV. The helical transmembrane segment at 269–289 threads the bilayer; sequence IVAYIVVALCYFPVALVGYYI. The Extracellular segment spans residues 290–305; sequence FGNGVEDNILMSLKKP. The chain crosses the membrane as a helical span at residues 306–326; sequence AWLIATANIFVVIHVIGSYQI. Residues 327-352 are Cytoplasmic-facing; it reads YAMPVFDMMETLLVKKLNFRPTTTLR. A helical transmembrane segment spans residues 353–375; it reads FFVRNFYVAATMFVGMTFPFFGG. Residues 376 to 378 are Extracellular-facing; sequence LLA. The chain crosses the membrane as a helical span at residues 379-401; the sequence is FFGGFAFAPTTYFLPCVIWLAIY. Over 402–409 the chain is Cytoplasmic; sequence KPKKYSLS. A helical transmembrane segment spans residues 410–430; sequence WWANWVCIVFGLFLMVLSPIG. Over 431–446 the chain is Extracellular; that stretch reads GLRTIVIQAKGYKFYS.

The protein belongs to the amino acid/polyamine transporter 2 family. Amino acid/auxin permease (AAAP) (TC 2.A.18.2) subfamily. As to expression, expressed in roots, stems, flowers, leaves, siliques and pollen. Found in the tips of roots and in the rhizodermis of emerging roots and in lateral roots. Higher expression in older leaves as compared to joung leaves. Detected first at the hydathodes, then in the epidermis and finally in matures leaves in all mesophyll cells. Not detected in vascular bundles or in seeds.

The protein resides in the cell membrane. Inhibited by carbonlycyanide m-chlorophenylhydrazone (CCCP) and DEPC. In terms of biological role, amino acid-proton symporter. Transporter with a broad specificity for histidine, lysine, glutamic acid, alanine, serine, proline and glycine. Involved in both apoplastic transport of amino acids in leaves and their uptake by roots. The sequence is that of Lysine histidine transporter 1 (LHT1) from Arabidopsis thaliana (Mouse-ear cress).